The chain runs to 389 residues: Succinate--CoA ligase [ADP-forming] subunit beta (389 aa).

The ATP-grasp domain maps to 9–244 (KQLFAEYGLP…PSQEDEREAH (236 aa)). ATP contacts are provided by residues Lys46, 53-55 (GRG), Glu99, Thr102, and Glu107. Mg(2+) is bound by residues Asn199 and Asp213. Substrate contacts are provided by residues Asn264 and 321-323 (GIV).

It belongs to the succinate/malate CoA ligase beta subunit family. In terms of assembly, heterotetramer of two alpha and two beta subunits. Mg(2+) serves as cofactor.

The catalysed reaction is succinate + ATP + CoA = succinyl-CoA + ADP + phosphate. It catalyses the reaction GTP + succinate + CoA = succinyl-CoA + GDP + phosphate. It functions in the pathway carbohydrate metabolism; tricarboxylic acid cycle; succinate from succinyl-CoA (ligase route): step 1/1. In terms of biological role, succinyl-CoA synthetase functions in the citric acid cycle (TCA), coupling the hydrolysis of succinyl-CoA to the synthesis of either ATP or GTP and thus represents the only step of substrate-level phosphorylation in the TCA. The beta subunit provides nucleotide specificity of the enzyme and binds the substrate succinate, while the binding sites for coenzyme A and phosphate are found in the alpha subunit. In Teredinibacter turnerae (strain ATCC 39867 / T7901), this protein is Succinate--CoA ligase [ADP-forming] subunit beta.